The sequence spans 881 residues: Leucine--tRNA ligase (881 aa).

Positions Pro-48–His-58 match the 'HIGH' region motif. A 'KMSKS' region motif is present at residues Lys-638 to Ser-642. Lys-641 serves as a coordination point for ATP.

It belongs to the class-I aminoacyl-tRNA synthetase family.

Its subcellular location is the cytoplasm. The catalysed reaction is tRNA(Leu) + L-leucine + ATP = L-leucyl-tRNA(Leu) + AMP + diphosphate. The polypeptide is Leucine--tRNA ligase (Herminiimonas arsenicoxydans).